A 74-amino-acid chain; its full sequence is Brevinin-2Ef (74 aa).

The N-terminal stretch at 1 to 22 (MFTMKKSLLLIFFLGTISLSLC) is a signal peptide. A propeptide spanning residues 23–41 (QEERNADDDDGEMTEEEKR) is cleaved from the precursor. Cysteine 68 and cysteine 74 are joined by a disulfide.

This sequence belongs to the frog skin active peptide (FSAP) family. Brevinin subfamily. As to expression, expressed by the skin glands.

The protein localises to the secreted. Its function is as follows. Shows antibacterial activity against representative Gram-negative and Gram-positive bacterial species, and hemolytic activity. The protein is Brevinin-2Ef of Pelophylax lessonae (Pool frog).